Consider the following 102-residue polypeptide: Large ribosomal subunit protein bL21 (102 aa).

Belongs to the bacterial ribosomal protein bL21 family. As to quaternary structure, part of the 50S ribosomal subunit. Contacts protein L20.

Functionally, this protein binds to 23S rRNA in the presence of protein L20. This chain is Large ribosomal subunit protein bL21, found in Finegoldia magna (strain ATCC 29328 / DSM 20472 / WAL 2508) (Peptostreptococcus magnus).